A 175-amino-acid polypeptide reads, in one-letter code: Inorganic pyrophosphatase (175 aa).

Residues lysine 30, arginine 44, and tyrosine 56 each contribute to the substrate site. Residues aspartate 66, aspartate 71, and aspartate 103 each coordinate Mg(2+). Tyrosine 142 contacts substrate.

The protein belongs to the PPase family. As to quaternary structure, homohexamer. It depends on Mg(2+) as a cofactor.

The protein resides in the cytoplasm. The enzyme catalyses diphosphate + H2O = 2 phosphate + H(+). In terms of biological role, catalyzes the hydrolysis of inorganic pyrophosphate (PPi) forming two phosphate ions. The sequence is that of Inorganic pyrophosphatase from Ralstonia nicotianae (strain ATCC BAA-1114 / GMI1000) (Ralstonia solanacearum).